A 63-amino-acid polypeptide reads, in one-letter code: Conotoxin Tx-D0111 (63 aa).

The signal sequence occupies residues 1-19; sequence MRCLPVFVILLLLIASTPS. A propeptide spanning residues 20–47 is cleaved from the precursor; that stretch reads DTVPLKTKDDMPQASFHGNARRTLQMLS.

Belongs to the conotoxin T superfamily. Contains 2 disulfide bonds that can be either 'C1-C3, C2-C4' or 'C1-C4, C2-C3', since these disulfide connectivities have been observed for conotoxins with cysteine framework V (for examples, see AC P0DQQ7 and AC P81755). In terms of tissue distribution, expressed by the venom duct.

The protein resides in the secreted. The sequence is that of Conotoxin Tx-D0111 from Conus textile (Cloth-of-gold cone).